Reading from the N-terminus, the 810-residue chain is Exocyst complex component 6B (810 aa).

Residues 79–118 (TELLKVRGEAQKLKNQVTDTNRKLQHEGKELVIAMEELKQ) adopt a coiled-coil conformation. The interval 258 to 282 (ESTSPKSEQDSGILDVEDEEDDEEV) is disordered. Over residues 272 to 282 (DVEDEEDDEEV) the composition is skewed to acidic residues.

It belongs to the SEC15 family. The exocyst complex is composed of SEC3, SEC5, SEC6, SEC8, SEC10, SEC15, EXO70 and EXO84.

In terms of biological role, component of the exocyst complex involved in the docking of exocytic vesicles with fusion sites on the plasma membrane. This is Exocyst complex component 6B (Exoc6b) from Mus musculus (Mouse).